A 161-amino-acid polypeptide reads, in one-letter code: Tropomyosin-2 (161 aa).

Residues 1-161 (MEKIKEKLNS…DEIANSLENL (161 aa)) are a coiled coil. Positions 32–43 (LEQSNTEKENEI) are enriched in basic and acidic residues. Positions 32 to 97 (LEQSNTEKEN…NQDLEQQLED (66 aa)) are disordered. S55 bears the Phosphoserine mark. Over residues 62 to 83 (SQLSDTKQLAEDSNNLRSNNEN) the composition is skewed to polar residues. A phosphoserine mark is found at S116 and S157.

Homodimer.

It is found in the cytoplasm. It localises to the cytoskeleton. Involved in cell morphogenesis. Binds to F-actin and stabilizes the actin filaments. This Saccharomyces cerevisiae (strain ATCC 204508 / S288c) (Baker's yeast) protein is Tropomyosin-2 (TPM2).